Here is a 348-residue protein sequence, read N- to C-terminus: uncharacterized protein (348 aa).

NADP(+) is bound by residues lysine 41 and tyrosine 170. The residue at position 339 (serine 339) is a Phosphoserine.

This sequence belongs to the NAD(P)-dependent epimerase/dehydratase family. Dihydroflavonol-4-reductase subfamily.

This is an uncharacterized protein from Saccharomyces cerevisiae (strain ATCC 204508 / S288c) (Baker's yeast).